Reading from the N-terminus, the 539-residue chain is MSVKGITPQELAAYGIHNVSEIVYNPSYDLLFEEETKPTLEGYERGTLTTTGAIAVDTGIFTGRSPKDKYIVRDAITQDTVWWADQGKGKNDNKPLSQEIWNHLKGLVTEQLSGKRLFVVDTFCGANADTRLQVRFITEVAWQAHFVKNMFIRPSDEELARFEPDFIVMNGAKCTNPQWKEQGLNSENFVAFNLTERMQLIGGTWYGGEMKKGMFSMMNYLLPLKGIASMHCSANVGEKGDVAIFFGLSGTGKTTLSTDPKRKLIGDDEHGWDDDGVFNFEGGCYAKTIKLSEEAEPDIYHAIKRDALLENVVVLADGTVDFNDGSKTENTRVSYPIYHIDNIVKPVSKAGHATKVIFLTADAFGVLPPVSRLTANQTQYHFLSGFTAKLAGTERGVTEPTPTFSACFGAAFLSLHPTQYAEVLVKRMQAVGAQAYLVNTGWNGTGKRISIKDTRAIIDAILNGEIDKAETFTLPIFDLAVPMALPGVNPDILDPRDTYADKAQWQEKAEDLAKRFATNFDKYTDTPAGAALVSAGPKI.

R64, Y206, and K212 together coordinate substrate. Residues K212, H231, and 247-255 contribute to the ATP site; that span reads GLSGTGKTT. Residues K212 and H231 each coordinate Mn(2+). Position 268 (D268) interacts with Mn(2+). ATP is bound by residues E296, R332, 448-449, and T454; that span reads RI. R332 contributes to the substrate binding site.

It belongs to the phosphoenolpyruvate carboxykinase (ATP) family. In terms of assembly, monomer. It depends on Mn(2+) as a cofactor.

Its subcellular location is the cytoplasm. The catalysed reaction is oxaloacetate + ATP = phosphoenolpyruvate + ADP + CO2. The protein operates within carbohydrate biosynthesis; gluconeogenesis. Involved in the gluconeogenesis. Catalyzes the conversion of oxaloacetate (OAA) to phosphoenolpyruvate (PEP) through direct phosphoryl transfer between the nucleoside triphosphate and OAA. This is Phosphoenolpyruvate carboxykinase (ATP) from Yersinia pestis bv. Antiqua (strain Antiqua).